Reading from the N-terminus, the 182-residue chain is MILSDRTINQMIKNGELVVEPLEEYQIQPASIDLRLGSSFLKIDENLMEVMTLNDEIKYVNLERKEIIVPPNSFLLATTREYIKLPPDITAFVEGRSSIGRMGLFIQNAGWVDPGFEGQITLELYNANRLPIKLTAGRRICQLVLARMDKEAKTPYQGKYLYQKKAVGSRVYQDLENKQNKN.

DCTP contacts are provided by residues 96-101 (RSSIGR), aspartate 113, 121-123 (TLE), glutamine 142, tyrosine 156, and glutamine 163. Glutamate 123 acts as the Proton donor/acceptor in catalysis.

It belongs to the dCTP deaminase family. Homotrimer.

It carries out the reaction dCTP + 2 H2O = dUMP + NH4(+) + diphosphate. Its pathway is pyrimidine metabolism; dUMP biosynthesis; dUMP from dCTP: step 1/1. Bifunctional enzyme that catalyzes both the deamination of dCTP to dUTP and the hydrolysis of dUTP to dUMP without releasing the toxic dUTP intermediate. The sequence is that of dCTP deaminase, dUMP-forming from Halothermothrix orenii (strain H 168 / OCM 544 / DSM 9562).